We begin with the raw amino-acid sequence, 311 residues long: ATP synthase subunit gamma, mitochondrial (311 aa).

The N-terminal 33 residues, 1–33, are a transit peptide targeting the mitochondrion; that stretch reads MLSRIVSNNATRSVMCHQAQVGILYKTNPVRTY.

The protein belongs to the ATPase gamma chain family. As to quaternary structure, F-type ATPases have 2 components, CF(1) - the catalytic core - and CF(0) - the membrane proton channel. CF(1) has five subunits: alpha(3), beta(3), gamma(1), delta(1), epsilon(1). CF(0) has three main subunits: a, b and c.

It localises to the mitochondrion. Its subcellular location is the mitochondrion inner membrane. In terms of biological role, mitochondrial membrane ATP synthase (F(1)F(0) ATP synthase or Complex V) produces ATP from ADP in the presence of a proton gradient across the membrane which is generated by electron transport complexes of the respiratory chain. F-type ATPases consist of two structural domains, F(1) - containing the extramembraneous catalytic core, and F(0) - containing the membrane proton channel, linked together by a central stalk and a peripheral stalk. During catalysis, ATP synthesis in the catalytic domain of F(1) is coupled via a rotary mechanism of the central stalk subunits to proton translocation. Part of the complex F(1) domain and the central stalk which is part of the complex rotary element. The gamma subunit protrudes into the catalytic domain formed of alpha(3)beta(3). Rotation of the central stalk against the surrounding alpha(3)beta(3) subunits leads to hydrolysis of ATP in three separate catalytic sites on the beta subunits. This is ATP synthase subunit gamma, mitochondrial (ATP3) from Saccharomyces cerevisiae (strain ATCC 204508 / S288c) (Baker's yeast).